Reading from the N-terminus, the 194-residue chain is Protein GrpE (194 aa).

Polar residues predominate over residues 1–14 (MENTQENPTSQNPT). Positions 1-50 (MENTQENPTSQNPTPADETARQAAEAAAPQQEAAANAATDSPVNAEQSAL) are disordered. A compositionally biased stretch (low complexity) spans 21–38 (RQAAEAAAPQQEAAANAA).

This sequence belongs to the GrpE family. As to quaternary structure, homodimer.

Its subcellular location is the cytoplasm. Participates actively in the response to hyperosmotic and heat shock by preventing the aggregation of stress-denatured proteins, in association with DnaK and GrpE. It is the nucleotide exchange factor for DnaK and may function as a thermosensor. Unfolded proteins bind initially to DnaJ; upon interaction with the DnaJ-bound protein, DnaK hydrolyzes its bound ATP, resulting in the formation of a stable complex. GrpE releases ADP from DnaK; ATP binding to DnaK triggers the release of the substrate protein, thus completing the reaction cycle. Several rounds of ATP-dependent interactions between DnaJ, DnaK and GrpE are required for fully efficient folding. In Paraburkholderia phytofirmans (strain DSM 17436 / LMG 22146 / PsJN) (Burkholderia phytofirmans), this protein is Protein GrpE.